The sequence spans 61 residues: Small ribosomal subunit protein uS14 (61 aa).

Residues cysteine 24, cysteine 27, cysteine 40, and cysteine 43 each contribute to the Zn(2+) site.

The protein belongs to the universal ribosomal protein uS14 family. Zinc-binding uS14 subfamily. As to quaternary structure, part of the 30S ribosomal subunit. Contacts proteins S3 and S10. Zn(2+) serves as cofactor.

In terms of biological role, binds 16S rRNA, required for the assembly of 30S particles and may also be responsible for determining the conformation of the 16S rRNA at the A site. This Acidothermus cellulolyticus (strain ATCC 43068 / DSM 8971 / 11B) protein is Small ribosomal subunit protein uS14.